A 406-amino-acid chain; its full sequence is Glucose-1-phosphate adenylyltransferase (406 aa).

Alpha-D-glucose 1-phosphate is bound by residues Y100, G165, 181 to 182, and S199; that span reads EK.

The protein belongs to the bacterial/plant glucose-1-phosphate adenylyltransferase family. Homotetramer.

The catalysed reaction is alpha-D-glucose 1-phosphate + ATP + H(+) = ADP-alpha-D-glucose + diphosphate. The protein operates within glycan biosynthesis; glycogen biosynthesis. In terms of biological role, involved in the biosynthesis of ADP-glucose, a building block required for the elongation reactions to produce glycogen. Catalyzes the reaction between ATP and alpha-D-glucose 1-phosphate (G1P) to produce pyrophosphate and ADP-Glc. In Streptomyces avermitilis (strain ATCC 31267 / DSM 46492 / JCM 5070 / NBRC 14893 / NCIMB 12804 / NRRL 8165 / MA-4680), this protein is Glucose-1-phosphate adenylyltransferase.